The sequence spans 316 residues: Acetaldehyde dehydrogenase (316 aa).

Position 12-15 (12-15) interacts with NAD(+); it reads SGNI. Cys132 serves as the catalytic Acyl-thioester intermediate. NAD(+)-binding positions include 163-171 and Asn289; that span reads SAGPGTRAN.

It belongs to the acetaldehyde dehydrogenase family.

It catalyses the reaction acetaldehyde + NAD(+) + CoA = acetyl-CoA + NADH + H(+). The chain is Acetaldehyde dehydrogenase (bphG) from Bordetella avium (strain 197N).